The following is a 527-amino-acid chain: Anthranilate synthase component 1 1 (527 aa).

Residue Ser52 participates in L-tryptophan binding. The disordered stretch occupies residues 53–72 (AEKTPASDPDGAFTPDTTTE). 298–300 (PYM) is a binding site for L-tryptophan. Residue 333–334 (GT) coordinates chorismate. Glu360 provides a ligand contact to Mg(2+). Chorismate-binding positions include Tyr448, Arg468, 486–488 (GAG), and Gly488. Glu501 contacts Mg(2+).

Belongs to the anthranilate synthase component I family. Tetramer of two components I and two components II. It depends on Mg(2+) as a cofactor.

The enzyme catalyses chorismate + L-glutamine = anthranilate + pyruvate + L-glutamate + H(+). Its pathway is amino-acid biosynthesis; L-tryptophan biosynthesis; L-tryptophan from chorismate: step 1/5. This is Anthranilate synthase component 1 1 (trpE1) from Halobacterium salinarum (strain ATCC 700922 / JCM 11081 / NRC-1) (Halobacterium halobium).